We begin with the raw amino-acid sequence, 183 residues long: Ribosome rescue factor SmrB (183 aa).

In terms of domain architecture, Smr spans 98 to 173 (LDLHGLTQLQ…GDAALLVLIE (76 aa)).

The protein belongs to the SmrB family. In terms of assembly, associates with collided ribosomes, but not with correctly translating polysomes.

Its function is as follows. Acts as a ribosome collision sensor. Detects stalled/collided disomes (pairs of ribosomes where the leading ribosome is stalled and a second ribosome has collided with it) and endonucleolytically cleaves mRNA at the 5' boundary of the stalled ribosome. Stalled/collided disomes form a new interface (primarily via the 30S subunits) that binds SmrB. Cleaved mRNA becomes available for tmRNA ligation, leading to ribosomal subunit dissociation and rescue of stalled ribosomes. The chain is Ribosome rescue factor SmrB from Shigella boydii serotype 18 (strain CDC 3083-94 / BS512).